The chain runs to 282 residues: sn-glycerol-3-phosphate transport system permease protein UgpE (282 aa).

The next 6 helical transmembrane spans lie at 14–34 (LILILGIIIVAFPIYYTFVAS), 86–106 (MAIAVGKIIISFMSAFAIVFF), 112–132 (MFFFWMIFITLMLPVEVRILP), 146–168 (YAGLTLPLMASATATFLFRQFFL), 201–221 (IAALFVILFIYGWTQYLWPLL), and 248–268 (WNYVMVTAILAIIPLILVVVL). The ABC transmembrane type-1 domain maps to 78-269 (LWNSFVVAMA…IPLILVVVLM (192 aa)).

The protein belongs to the binding-protein-dependent transport system permease family. As to quaternary structure, the complex is composed of two ATP-binding proteins (UgpC), two transmembrane proteins (UgpA and UgpE) and a solute-binding protein (UgpB).

The protein localises to the cell inner membrane. Functionally, part of the ABC transporter complex UgpBAEC involved in sn-glycerol-3-phosphate (G3P) import. Probably responsible for the translocation of the substrate across the membrane. This is sn-glycerol-3-phosphate transport system permease protein UgpE (ugpE) from Brucella abortus (strain 2308).